The following is a 321-amino-acid chain: Gap junction delta-2 protein (321 aa).

Over 1–19 (MGEWTILERLLEAAVQQHS) the chain is Cytoplasmic. The chain crosses the membrane as a helical span at residues 20-42 (TMIGRILLTVVVIFRILIVAIVG). Over 43–75 (ETVYDDEQTMFVCNTLQPGCNQACYDRAFPISH) the chain is Extracellular. The chain crosses the membrane as a helical span at residues 76-98 (IRYWVFQIIMVCTPSLCFITYSV). Residues 99–197 (HQSAKQRERR…KLRRQEGISR (99 aa)) are Cytoplasmic-facing. A disordered region spans residues 118-141 (RDPPESIGGPGGTGGGGSGGGKRE). A compositionally biased stretch (gly residues) spans 125–137 (GGPGGTGGGGSGG). Residues 198-220 (FYIIQVVFRNALEIGFLVGQYFL) form a helical membrane-spanning segment. The Extracellular segment spans residues 221-252 (YGFSVPGLYECNRYPCIKEVECYVSRPTEKTV). A helical transmembrane segment spans residues 253–275 (FLVFMFAVSGICVVLNLAELNHL). At 276 to 321 (GWRKIKLAVRGAQAKRKSIYEIRNKDLPRVSVPNFGRTQSSDSAYV) the chain is on the cytoplasmic side.

This sequence belongs to the connexin family. Delta-type subfamily. A connexon is composed of a hexamer of connexins. In terms of tissue distribution, highly expressed in neurons.

The protein resides in the cell membrane. It is found in the cell junction. It localises to the gap junction. Its function is as follows. One gap junction consists of a cluster of closely packed pairs of transmembrane channels, the connexons, through which materials of low MW diffuse from one cell to a neighboring cell. This is Gap junction delta-2 protein (GJD2) from Homo sapiens (Human).